The primary structure comprises 85 residues: ATP synthase subunit c (85 aa).

The next 2 helical transmembrane spans lie at 10 to 30 (IAVA…FAVL) and 53 to 73 (FIIA…ALLF).

Belongs to the ATPase C chain family. In terms of assembly, F-type ATPases have 2 components, F(1) - the catalytic core - and F(0) - the membrane proton channel. F(1) has five subunits: alpha(3), beta(3), gamma(1), delta(1), epsilon(1). F(0) has three main subunits: a(1), b(2) and c(10-14). The alpha and beta chains form an alternating ring which encloses part of the gamma chain. F(1) is attached to F(0) by a central stalk formed by the gamma and epsilon chains, while a peripheral stalk is formed by the delta and b chains.

It is found in the cell inner membrane. In terms of biological role, f(1)F(0) ATP synthase produces ATP from ADP in the presence of a proton or sodium gradient. F-type ATPases consist of two structural domains, F(1) containing the extramembraneous catalytic core and F(0) containing the membrane proton channel, linked together by a central stalk and a peripheral stalk. During catalysis, ATP synthesis in the catalytic domain of F(1) is coupled via a rotary mechanism of the central stalk subunits to proton translocation. Its function is as follows. Key component of the F(0) channel; it plays a direct role in translocation across the membrane. A homomeric c-ring of between 10-14 subunits forms the central stalk rotor element with the F(1) delta and epsilon subunits. This chain is ATP synthase subunit c, found in Vibrio cholerae serotype O1 (strain ATCC 39315 / El Tor Inaba N16961).